Reading from the N-terminus, the 276-residue chain is MGIKNLNSVTPSLRGTVLLDKSTLWKGRPEKSLVGYKISHGGRNSRGVITVRHRGKGHKRLYRIIDFKRKKVGVPATVERLEYDPNRTAFIALLSYDDGEKSYIIAPHGLKKGDVIMSGNGSDILPGNCLMLKLIPVGTFVHNVELRPGGGGIIARSAGTYAQLMSKDGIYVLLRLSSGEIRKVLADCCATIGIVSNLDNQNVKLGKAGRSRWLGIRPTVRGVAMNPIDHPHGGGEGKTSGGRNPVTPWGVSTKGKKTRKKNKSSNKYIKRVSDKG.

The disordered stretch occupies residues Ala224 to Gly276. Positions Lys254–Lys270 are enriched in basic residues.

This sequence belongs to the universal ribosomal protein uL2 family. As to quaternary structure, part of the 50S ribosomal subunit. Forms a bridge to the 30S subunit in the 70S ribosome.

Functionally, one of the primary rRNA binding proteins. Required for association of the 30S and 50S subunits to form the 70S ribosome, for tRNA binding and peptide bond formation. It has been suggested to have peptidyltransferase activity; this is somewhat controversial. Makes several contacts with the 16S rRNA in the 70S ribosome. The chain is Large ribosomal subunit protein uL2 from Ehrlichia ruminantium (strain Gardel).